A 292-amino-acid polypeptide reads, in one-letter code: Putative pyruvate, phosphate dikinase regulatory protein (292 aa).

155 to 162 (GVSRSSKT) provides a ligand contact to ADP.

The protein belongs to the pyruvate, phosphate/water dikinase regulatory protein family. PDRP subfamily.

The catalysed reaction is N(tele)-phospho-L-histidyl/L-threonyl-[pyruvate, phosphate dikinase] + ADP = N(tele)-phospho-L-histidyl/O-phospho-L-threonyl-[pyruvate, phosphate dikinase] + AMP + H(+). It catalyses the reaction N(tele)-phospho-L-histidyl/O-phospho-L-threonyl-[pyruvate, phosphate dikinase] + phosphate + H(+) = N(tele)-phospho-L-histidyl/L-threonyl-[pyruvate, phosphate dikinase] + diphosphate. Its function is as follows. Bifunctional serine/threonine kinase and phosphorylase involved in the regulation of the pyruvate, phosphate dikinase (PPDK) by catalyzing its phosphorylation/dephosphorylation. This Acidiphilium cryptum (strain JF-5) protein is Putative pyruvate, phosphate dikinase regulatory protein.